The chain runs to 379 residues: Chaperone protein DnaJ (379 aa).

Residues 5–70 (DYYEVLGLSK…EKKAMYDQYG (66 aa)) enclose the J domain. The CR-type zinc finger occupies 136–214 (GCKKDIRIHT…CHGDGRVHKA (79 aa)). Positions 149, 152, 166, 169, 188, 191, 202, and 205 each coordinate Zn(2+). 4 CXXCXGXG motif repeats span residues 149–156 (CDTCHGTG), 166–173 (CSHCHGSG), 188–195 (CPSCHGTG), and 202–209 (CRSCHGDG).

Belongs to the DnaJ family. As to quaternary structure, homodimer. Zn(2+) serves as cofactor.

The protein resides in the cytoplasm. Its function is as follows. Participates actively in the response to hyperosmotic and heat shock by preventing the aggregation of stress-denatured proteins and by disaggregating proteins, also in an autonomous, DnaK-independent fashion. Unfolded proteins bind initially to DnaJ; upon interaction with the DnaJ-bound protein, DnaK hydrolyzes its bound ATP, resulting in the formation of a stable complex. GrpE releases ADP from DnaK; ATP binding to DnaK triggers the release of the substrate protein, thus completing the reaction cycle. Several rounds of ATP-dependent interactions between DnaJ, DnaK and GrpE are required for fully efficient folding. Also involved, together with DnaK and GrpE, in the DNA replication of plasmids through activation of initiation proteins. The polypeptide is Chaperone protein DnaJ (Mannheimia haemolytica (Pasteurella haemolytica)).